The sequence spans 89 residues: Cell division protein ZapA (89 aa).

It belongs to the ZapA family. Type 2 subfamily. As to quaternary structure, homodimer. Interacts with FtsZ.

Its subcellular location is the cytoplasm. Activator of cell division through the inhibition of FtsZ GTPase activity, therefore promoting FtsZ assembly into bundles of protofilaments necessary for the formation of the division Z ring. It is recruited early at mid-cell but it is not essential for cell division. In Bacillus thuringiensis (strain Al Hakam), this protein is Cell division protein ZapA.